The chain runs to 583 residues: Laminarase-resistance protein LRE1 (583 aa).

Positions 1-24 (MPNTHTQHVQISEPNPVNTLSTPS) are enriched in polar residues. 2 disordered regions span residues 1–31 (MPNTHTQHVQISEPNPVNTLSTPSKRGHRHR) and 330–380 (LKDN…HMQH). 2 stretches are compositionally biased toward basic and acidic residues: residues 332-342 (DNPRYAKDGYP) and 354-366 (LDSDKRQDFSGES). Phosphoserine occurs at positions 393 and 398. The segment at 457 to 486 (SCTPDGKEEMNRLKSNDSNEYSKSEGQIRT) is disordered. Basic and acidic residues predominate over residues 461 to 479 (DGKEEMNRLKSNDSNEYSK). A phosphoserine mark is found at Ser516 and Ser552.

Phosphorylated by CDC28/CDK1.

Functionally, overexpression affects chitinase expression, cell separation and budding pattern, and increases trehalose accumulation and heat resistance by inhibiting protein kinase CBK1. Overexpression also suppresses temperature-induced hyperosmosensitivity and sensitivity to cell wall degrading enzymes. Overexpression of both LRE1 and PBN1 confers resistance to laminarinase. The sequence is that of Laminarase-resistance protein LRE1 (LRE1) from Saccharomyces cerevisiae (strain ATCC 204508 / S288c) (Baker's yeast).